A 275-amino-acid polypeptide reads, in one-letter code: Cell division protein FtsQ (275 aa).

Residues 1–20 are disordered; it reads MRDLHKKKPRPVTQNRLKKP. The Cytoplasmic segment spans residues 1-38; the sequence is MRDLHKKKPRPVTQNRLKKPPKTCKPINYRGILKKTAK. Residues 39–61 form a helical membrane-spanning segment; that stretch reads VVGGAALISAVGCAGYGIYRIIA. Residues 62 to 275 are Periplasmic-facing; that stretch reads GTTFFKLERI…YSDKIIVKKV (214 aa). Residues 66 to 134 form the POTRA domain; the sequence is FKLERIEVSE…NTLSMQIAER (69 aa).

It belongs to the FtsQ/DivIB family. FtsQ subfamily.

The protein localises to the cell inner membrane. In terms of biological role, essential cell division protein. This Geotalea daltonii (strain DSM 22248 / JCM 15807 / FRC-32) (Geobacter daltonii) protein is Cell division protein FtsQ.